The following is a 793-amino-acid chain: Methionine--tRNA ligase (793 aa).

The 'HIGH' region signature appears at 11 to 21 (PYVNNFPHLGN). Zn(2+)-binding residues include C142, C145, C155, and C158. Residues 334 to 338 (KFSKS) carry the 'KMSKS' region motif. Position 337 (K337) interacts with ATP. Residues 581 to 590 (SQKDRKKSEK) show a composition bias toward basic and acidic residues. Residues 581-610 (SQKDRKKSEKGCSACKDSGSSKSDAAASSA) form a disordered region. Residues 591-610 (GCSACKDSGSSKSDAAASSA) show a composition bias toward low complexity. The tRNA-binding domain occupies 622 to 727 (FSKKIALKTA…PWAAPGTPVI (106 aa)).

This sequence belongs to the class-I aminoacyl-tRNA synthetase family. MetG type 1 subfamily. In terms of assembly, homodimer. Requires Zn(2+) as cofactor.

It localises to the cytoplasm. It carries out the reaction tRNA(Met) + L-methionine + ATP = L-methionyl-tRNA(Met) + AMP + diphosphate. Its function is as follows. Is required not only for elongation of protein synthesis but also for the initiation of all mRNA translation through initiator tRNA(fMet) aminoacylation. This is Methionine--tRNA ligase from Treponema denticola (strain ATCC 35405 / DSM 14222 / CIP 103919 / JCM 8153 / KCTC 15104).